The primary structure comprises 506 residues: Cobyric acid synthase (506 aa).

In terms of domain architecture, GATase cobBQ-type spans 251-448 (DIDIAVVQVP…LHGLFDSDAF (198 aa)). Residue cysteine 332 is the Nucleophile of the active site. Histidine 440 is an active-site residue.

It belongs to the CobB/CobQ family. CobQ subfamily.

It participates in cofactor biosynthesis; adenosylcobalamin biosynthesis. Catalyzes amidations at positions B, D, E, and G on adenosylcobyrinic A,C-diamide. NH(2) groups are provided by glutamine, and one molecule of ATP is hydrogenolyzed for each amidation. The protein is Cobyric acid synthase of Citrobacter koseri (strain ATCC BAA-895 / CDC 4225-83 / SGSC4696).